A 325-amino-acid polypeptide reads, in one-letter code: D-alanine--D-alanine ligase (325 aa).

The region spanning 107–311 is the ATP-grasp domain; that stretch reads KRLLLSESLP…YEALCVEVLK (205 aa). 137–192 provides a ligand contact to ATP; it reads VDTLGLPLIVKPAREGSSLGLSKVTERAAMAAAVALAEKMDADILCEQFISGDEVT. D264, E278, and N280 together coordinate Mg(2+).

This sequence belongs to the D-alanine--D-alanine ligase family. Mg(2+) serves as cofactor. It depends on Mn(2+) as a cofactor.

Its subcellular location is the cytoplasm. The enzyme catalyses 2 D-alanine + ATP = D-alanyl-D-alanine + ADP + phosphate + H(+). The protein operates within cell wall biogenesis; peptidoglycan biosynthesis. Cell wall formation. The protein is D-alanine--D-alanine ligase of Polaromonas naphthalenivorans (strain CJ2).